The chain runs to 367 residues: Histidinol-phosphate aminotransferase (367 aa).

Residue Lys221 is modified to N6-(pyridoxal phosphate)lysine.

The protein belongs to the class-II pyridoxal-phosphate-dependent aminotransferase family. Histidinol-phosphate aminotransferase subfamily. In terms of assembly, homodimer. Requires pyridoxal 5'-phosphate as cofactor.

It catalyses the reaction L-histidinol phosphate + 2-oxoglutarate = 3-(imidazol-4-yl)-2-oxopropyl phosphate + L-glutamate. It functions in the pathway amino-acid biosynthesis; L-histidine biosynthesis; L-histidine from 5-phospho-alpha-D-ribose 1-diphosphate: step 7/9. This Erythrobacter litoralis (strain HTCC2594) protein is Histidinol-phosphate aminotransferase.